Reading from the N-terminus, the 546-residue chain is Hexose oxidase (546 aa).

Residues 40-222 (IGTNIDFVYV…TKYYFKDLPM (183 aa)) form the FAD-binding PCMH-type domain. Residues 79 to 138 (HCYEDFVFDECVKAIINVTGLVESGYDDDRGYFVSSGDTNWGSFKTLFRDHGRVLPGGSC) constitute a cross-link (6-(S-cysteinyl)-8alpha-(pros-histidyl)-FAD (His-Cys)). Asn95 and Asn358 each carry an N-linked (GlcNAc...) asparagine glycan.

Belongs to the oxygen-dependent FAD-linked oxidoreductase family. As to quaternary structure, homodimer. Requires FAD as cofactor. In terms of processing, cleaved into 40 kDa and 29 kDa cleavage products, but the 2 polypeptide chains do not separate and seem to be physically linked together. The FAD cofactor is bound via a bicovalent 6-S-cysteinyl, 8alpha-N1-histidyl FAD linkage.

It carries out the reaction beta-D-glucose + O2 = D-glucono-1,5-lactone + H2O2. The enzyme catalyses D-galactose + O2 = D-galactono-1,5-lactone + H2O2. It catalyses the reaction D-maltose + O2 = D-maltobiono-1,5-lactone + H2O2. The catalysed reaction is D-cellobiose + O2 = D-cellobiono-1,5-lactone + H2O2. It carries out the reaction beta-lactose + O2 = lactobiono-1,5-lactone + H2O2. In terms of biological role, catalyzes the selective oxidation of C1 hydroxyl moieties on mono- and disaccharides with concomitant reduction of molecular oxygen to hydrogen peroxide. This results in the formation of the corresponding lactones, which typically undergo spontaneous hydrolysis. Hexose oxidase is able to oxidize a variety of substrates including D-glucose, D-galactose, maltose, cellobiose, and lactose. This chain is Hexose oxidase (HOX), found in Chondrus crispus (Carrageen Irish moss).